The chain runs to 247 residues: 4-hydroxy-tetrahydrodipicolinate reductase (247 aa).

Residues 9 to 14 (GAAGRM), 76 to 78 (GTT), and 103 to 106 (APNF) contribute to the NAD(+) site. His133 serves as the catalytic Proton donor/acceptor. His134 contacts (S)-2,3,4,5-tetrahydrodipicolinate. The active-site Proton donor is Lys137. Position 143–144 (143–144 (GT)) interacts with (S)-2,3,4,5-tetrahydrodipicolinate.

This sequence belongs to the DapB family.

Its subcellular location is the cytoplasm. The catalysed reaction is (S)-2,3,4,5-tetrahydrodipicolinate + NAD(+) + H2O = (2S,4S)-4-hydroxy-2,3,4,5-tetrahydrodipicolinate + NADH + H(+). It carries out the reaction (S)-2,3,4,5-tetrahydrodipicolinate + NADP(+) + H2O = (2S,4S)-4-hydroxy-2,3,4,5-tetrahydrodipicolinate + NADPH + H(+). The protein operates within amino-acid biosynthesis; L-lysine biosynthesis via DAP pathway; (S)-tetrahydrodipicolinate from L-aspartate: step 4/4. Functionally, catalyzes the conversion of 4-hydroxy-tetrahydrodipicolinate (HTPA) to tetrahydrodipicolinate. The sequence is that of 4-hydroxy-tetrahydrodipicolinate reductase from Beutenbergia cavernae (strain ATCC BAA-8 / DSM 12333 / CCUG 43141 / JCM 11478 / NBRC 16432 / NCIMB 13614 / HKI 0122).